The chain runs to 303 residues: Zinc transporter ZIP9-A (303 aa).

Residues 7–27 (ISLLSLAMLVGCYVSGIIPLA) form a helical membrane-spanning segment. Asn29 is a glycosylation site (N-linked (GlcNAc...) asparagine). The next 5 membrane-spanning stretches (helical) occupy residues 35–55 (LKLV…AVII), 102–122 (AYIG…DQIG), 142–162 (ITTT…LGAA), 172–192 (LIVF…LVSF), and 206–226 (HLLV…LGLS). Asn237 carries an N-linked (GlcNAc...) asparagine glycan. 2 helical membrane passes run 240 to 260 (GVAM…HVLP) and 282 to 302 (LEVC…IGHQ).

It belongs to the ZIP transporter (TC 2.A.5) family.

It localises to the golgi apparatus. The protein resides in the trans-Golgi network membrane. Its subcellular location is the cell membrane. It is found in the cytoplasm. The protein localises to the perinuclear region. It localises to the mitochondrion. The protein resides in the nucleus. The catalysed reaction is Zn(2+)(in) = Zn(2+)(out). Transports zinc ions across cell and organelle membranes into the cytoplasm and regulates intracellular zinc homeostasis. Participates in the zinc ions efflux out of the secretory compartments. Regulates intracellular zinc level, resulting in the enhancement of AKT1 and MAPK3/MAPK1 (Erk1/2) phosphorylation in response to the BCR activation. Also functions as a membrane androgen receptor that mediates, through a G protein, the non-classical androgen signaling pathway, characterized by the activation of MAPK3/MAPK1 (Erk1/2) and transcription factors CREB1 or ATF1. Moreover, has dual functions as a membrane-bound androgen receptor and as an androgen-dependent zinc transporter both of which are mediated through an inhibitory G protein (Gi) that mediates both MAP kinase and zinc signaling leading to the androgen-dependent apoptotic process. The sequence is that of Zinc transporter ZIP9-A (slc39a9-a) from Xenopus laevis (African clawed frog).